The chain runs to 70 residues: Translational regulator CsrA (70 aa).

This sequence belongs to the CsrA/RsmA family. As to quaternary structure, homodimer; the beta-strands of each monomer intercalate to form a hydrophobic core, while the alpha-helices form wings that extend away from the core.

It is found in the cytoplasm. A translational regulator that binds mRNA to regulate translation initiation and/or mRNA stability. Usually binds in the 5'-UTR at or near the Shine-Dalgarno sequence preventing ribosome-binding, thus repressing translation. Its main target seems to be the major flagellin gene, while its function is anatagonized by FliW. The protein is Translational regulator CsrA of Clostridioides difficile (strain 630) (Peptoclostridium difficile).